A 196-amino-acid chain; its full sequence is dTTP/UTP pyrophosphatase (196 aa).

The active-site Proton acceptor is the aspartate 72.

The protein belongs to the Maf family. YhdE subfamily. A divalent metal cation is required as a cofactor.

The protein localises to the cytoplasm. It catalyses the reaction dTTP + H2O = dTMP + diphosphate + H(+). The catalysed reaction is UTP + H2O = UMP + diphosphate + H(+). Functionally, nucleoside triphosphate pyrophosphatase that hydrolyzes dTTP and UTP. May have a dual role in cell division arrest and in preventing the incorporation of modified nucleotides into cellular nucleic acids. The polypeptide is dTTP/UTP pyrophosphatase (Chlamydia trachomatis serovar A (strain ATCC VR-571B / DSM 19440 / HAR-13)).